The chain runs to 137 residues: Major seminal plasma glycoprotein PSP-II (137 aa).

Positions 1–21 are cleaved as a signal peptide; sequence MKLGTAIPWALLLSTATLVST. 2 disulfides stabilise this stretch: Cys30–Cys51 and Cys74–Cys95. In terms of domain architecture, CUB spans 30–131; the sequence is CGRVIKDTSG…SPFLIYFYGS (102 aa). N-linked (GlcNAc...) (complex) asparagine glycosylation occurs at Asn119.

Monomer or heterodimer with PSP-I (depending on the type of glycosylation of PSP-I). In terms of tissue distribution, seminal plasma or sperm.

Its subcellular location is the secreted. In Sus scrofa (Pig), this protein is Major seminal plasma glycoprotein PSP-II.